The sequence spans 634 residues: DNA-directed RNA polymerase subunit gamma (634 aa).

Residues Cys-74, Cys-76, Cys-89, and Cys-92 each coordinate Zn(2+). The Mg(2+) site is built by Asp-471, Asp-473, and Asp-475.

The protein belongs to the RNA polymerase beta' chain family. RpoC1 subfamily. As to quaternary structure, in cyanobacteria the RNAP catalytic core is composed of 2 alpha, 1 beta, 1 beta', 1 gamma and 1 omega subunit. When a sigma factor is associated with the core the holoenzyme is formed, which can initiate transcription. Requires Mg(2+) as cofactor. The cofactor is Zn(2+).

The enzyme catalyses RNA(n) + a ribonucleoside 5'-triphosphate = RNA(n+1) + diphosphate. In terms of biological role, DNA-dependent RNA polymerase catalyzes the transcription of DNA into RNA using the four ribonucleoside triphosphates as substrates. The sequence is that of DNA-directed RNA polymerase subunit gamma from Synechococcus sp. (strain RCC307).